The primary structure comprises 185 residues: Ribosome-recycling factor (185 aa).

It belongs to the RRF family.

It is found in the cytoplasm. Functionally, responsible for the release of ribosomes from messenger RNA at the termination of protein biosynthesis. May increase the efficiency of translation by recycling ribosomes from one round of translation to another. This chain is Ribosome-recycling factor, found in Neisseria gonorrhoeae (strain ATCC 700825 / FA 1090).